The primary structure comprises 306 residues: uncharacterized protein (306 aa).

A run of 10 helical transmembrane segments spans residues 6-26 (LLGF…PIAL), 35-55 (AQTI…ALLA), 69-89 (YAWI…LFSS), 98-118 (VAQI…VLIF), 122-142 (LGLH…LFFN), 154-174 (YSTG…YGMA), 186-206 (QILL…ADFS), 211-231 (LTPL…IGYG), 247-267 (VVIT…HYFS), and 281-301 (YIGA…HKLL). EamA domains are found at residues 17–142 (MAWG…LFFN) and 166–296 (LIWV…LSAI).

It belongs to the EamA transporter family.

The protein localises to the cell membrane. This is an uncharacterized protein from Haemophilus influenzae (strain ATCC 51907 / DSM 11121 / KW20 / Rd).